A 519-amino-acid chain; its full sequence is Voltage-gated potassium channel regulatory subunit KCNG4 (519 aa).

Residues 1–25 are disordered; the sequence is MPMPSRDGGLHPRHHHYGSHSPWSQ. At 1-218 the chain is on the cytoplasmic side; that stretch reads MPMPSRDGGL…EMVENPQSGL (218 aa). A helical membrane pass occupies residues 219–240; it reads PGKVFACLSILFVATTAVSLCV. Topologically, residues 241-261 are extracellular; it reads STMPDLRAEEDQGECSRKCYY. The chain crosses the membrane as a helical span at residues 262-283; the sequence is IFIVETICVAWFSLEFCLRFVQ. Over 284–294 the chain is Cytoplasmic; the sequence is AQDKCQFFQGP. Residues 295-314 form a helical membrane-spanning segment; it reads LNIIDILAISPYYVSLAVSE. The Extracellular portion of the chain corresponds to 315–328; it reads EPPEDGERPSGSSY. Residues 329-353 traverse the membrane as a helical; Voltage-sensor segment; sequence LEKVGLVLRVLRALRILYVMRLARH. Residues 354-368 are Cytoplasmic-facing; it reads SLGLQTLGLTVRRCT. A helical membrane pass occupies residues 369–390; it reads REFGLLLLFLAVAITLFSPLVY. The Extracellular segment spans residues 391 to 405; that stretch reads VAEKESGRVLEFTSI. An intramembrane region (helical) is located at residues 406–417; that stretch reads PASYWWAIISMT. The Selectivity filter signature appears at 418 to 423; that stretch reads TVGYGD. The stretch at 418–425 is an intramembrane region; sequence TVGYGDMV. Over 426-432 the chain is Extracellular; sequence PRSVPGQ. A helical membrane pass occupies residues 433 to 461; sequence MVALSSILSGILIMAFPATSIFHTFSHSY. Residues 462-519 lie on the Cytoplasmic side of the membrane; the sequence is LELKKEQEQLQARLRHLQNTGPASECELLDPHVASEHELMNDVNDLILEGPALPIMHM.

This sequence belongs to the potassium channel family. G (TC 1.A.1.2) subfamily. Kv6.4/KCNG4 sub-subfamily. Heterotetramer with KCNB1. Does not form homomultimer. As to expression, highly expressed in brain, and at lower levels in liver, small intestine and colon.

It localises to the cell membrane. Regulatory subunit of the voltage-gated potassium (Kv) channel which, when coassembled with KCNB1, modulates the kinetics parameters of the heterotetrameric channel namely the time course of activation, deactivation and inactivation and on the voltage-dependence of activation. Potassium channel subunit that does not form functional channels by itself. Reduces the deactivation rate. Modulates the threshold for activation by shifting by approximately 20 mV in hyperpolarizing direction. Markedly changes the inactivation by shifting the voltage dependence of inactivation by approximately 40 mV in hyperpolarizing direction. Acceleratee activation and enhances the time course of activation. The protein is Voltage-gated potassium channel regulatory subunit KCNG4 of Homo sapiens (Human).